The chain runs to 666 residues: Pentatricopeptide repeat-containing protein At1g64100 (666 aa).

PPR repeat units lie at residues 105–139, 140–174, 175–209, 225–259, 260–294, 295–329, 330–364, 365–399, 400–430, 431–465, 466–500, 501–535, 536–570, 571–605, and 606–640; these read TAVD…RIPL, NIYS…GFQP, DVVT…GFLE, VVIT…GLHI, DVVT…HIKP, DVVI…GIAP, NVFT…EINP, DVLT…CIFP, DTVT…MASP, DVVT…GLVA, NTTT…GVCP, DTIT…KIDL, DTVA…GVEP, DVQT…GHEP, and DNST…GFSG.

Belongs to the PPR family. P subfamily.

This Arabidopsis thaliana (Mouse-ear cress) protein is Pentatricopeptide repeat-containing protein At1g64100.